Reading from the N-terminus, the 76-residue chain is Conotoxin Lt6.1 (76 aa).

Positions 1–22 are cleaved as a signal peptide; that stretch reads MKLTCVLIIAVLFLMDNQLITA. Positions 23-48 are excised as a propeptide; that stretch reads DYPRDEQVYRAVRLRDAMQKSKGSGS. 3 cysteine pairs are disulfide-bonded: Cys-49-Cys-62, Cys-56-Cys-67, and Cys-61-Cys-75.

This sequence belongs to the conotoxin O1 superfamily. In terms of tissue distribution, expressed by the venom duct.

Its subcellular location is the secreted. This is Conotoxin Lt6.1 from Conus litteratus (Lettered cone).